The sequence spans 444 residues: Phosphoglucosamine mutase (444 aa).

The active-site Phosphoserine intermediate is serine 102. 4 residues coordinate Mg(2+): serine 102, aspartate 241, aspartate 243, and aspartate 245. Serine 102 is modified (phosphoserine).

Belongs to the phosphohexose mutase family. It depends on Mg(2+) as a cofactor. In terms of processing, activated by phosphorylation.

The catalysed reaction is alpha-D-glucosamine 1-phosphate = D-glucosamine 6-phosphate. In terms of biological role, catalyzes the conversion of glucosamine-6-phosphate to glucosamine-1-phosphate. The polypeptide is Phosphoglucosamine mutase (Actinobacillus pleuropneumoniae serotype 7 (strain AP76)).